A 371-amino-acid chain; its full sequence is Probable dual-specificity RNA methyltransferase RlmN (371 aa).

Catalysis depends on Glu-114, which acts as the Proton acceptor. A Radical SAM core domain is found at 120 to 346; it reads DGPRRSICVS…ESAGVNVNFR (227 aa). A disulfide bridge connects residues Cys-127 and Cys-357. Cys-134, Cys-138, and Cys-141 together coordinate [4Fe-4S] cluster. S-adenosyl-L-methionine-binding positions include 183 to 184, Ser-215, 238 to 240, and Asn-314; these read GE and SLH. The active-site S-methylcysteine intermediate is the Cys-357.

Belongs to the radical SAM superfamily. RlmN family. [4Fe-4S] cluster is required as a cofactor.

Its subcellular location is the cytoplasm. It carries out the reaction adenosine(2503) in 23S rRNA + 2 reduced [2Fe-2S]-[ferredoxin] + 2 S-adenosyl-L-methionine = 2-methyladenosine(2503) in 23S rRNA + 5'-deoxyadenosine + L-methionine + 2 oxidized [2Fe-2S]-[ferredoxin] + S-adenosyl-L-homocysteine. The catalysed reaction is adenosine(37) in tRNA + 2 reduced [2Fe-2S]-[ferredoxin] + 2 S-adenosyl-L-methionine = 2-methyladenosine(37) in tRNA + 5'-deoxyadenosine + L-methionine + 2 oxidized [2Fe-2S]-[ferredoxin] + S-adenosyl-L-homocysteine. Its function is as follows. Specifically methylates position 2 of adenine 2503 in 23S rRNA and position 2 of adenine 37 in tRNAs. This Rhodopirellula baltica (strain DSM 10527 / NCIMB 13988 / SH1) protein is Probable dual-specificity RNA methyltransferase RlmN.